We begin with the raw amino-acid sequence, 305 residues long: MIKQRTLKQSIKVTGVGLHSGNKVTLTLRPAMPNTGVVYYRTDLNPAVAFPADPNSVRDTMLCTALINDQGVRISTVEHLNAALAGLGIDNIIIEVDAPEIPIMDGSASPFIYLLLDAGIEEQNAAKKFIRIKEYVRVEDGDKWAEFKPYNGFRLDFTIDFDHPAIGKDVRNYEMNFSAQAFVHQISRARTFGFMKDIEYLQSQGLALGGSLDNAIVLDDYRILNEDGLRFKDELVRHKMLDAIGDLYMAGYNIIGDFKAYKSGHGLNNKLLRAVLANQEAWEFVTFEDKEQVPQGYVAPAQVLI.

Residues H79, H238, and D242 each coordinate Zn(2+). Catalysis depends on H265, which acts as the Proton donor.

This sequence belongs to the LpxC family. Zn(2+) is required as a cofactor.

The enzyme catalyses a UDP-3-O-[(3R)-3-hydroxyacyl]-N-acetyl-alpha-D-glucosamine + H2O = a UDP-3-O-[(3R)-3-hydroxyacyl]-alpha-D-glucosamine + acetate. It participates in glycolipid biosynthesis; lipid IV(A) biosynthesis; lipid IV(A) from (3R)-3-hydroxytetradecanoyl-[acyl-carrier-protein] and UDP-N-acetyl-alpha-D-glucosamine: step 2/6. Functionally, catalyzes the hydrolysis of UDP-3-O-myristoyl-N-acetylglucosamine to form UDP-3-O-myristoylglucosamine and acetate, the committed step in lipid A biosynthesis. The polypeptide is UDP-3-O-acyl-N-acetylglucosamine deacetylase (Haemophilus influenzae (strain 86-028NP)).